Reading from the N-terminus, the 355-residue chain is C-C chemokine receptor type 1 (355 aa).

Residues 1 to 34 lie on the Extracellular side of the membrane; that stretch reads METPDTTENYDMITEFDYGDATPCHKVNERAILA. The chain crosses the membrane as a helical span at residues 35-60; that stretch reads QLLPPLYSLVFVIGVVGNLLVVLVLV. At 61–64 the chain is on the cytoplasmic side; it reads QYKR. The helical transmembrane segment at 65-91 threads the bilayer; the sequence is LKNMTNIYLLNLAISDLLFLFTLPFLI. The Extracellular portion of the chain corresponds to 92–107; it reads YYKSTDDWIFGDAMCK. Cysteines 106 and 183 form a disulfide. A helical membrane pass occupies residues 108–129; that stretch reads ILSGFYYTGLYSEIFFIILLTI. The Cytoplasmic segment spans residues 130–146; it reads DRYLAIVHAVFALRART. A helical transmembrane segment spans residues 147–171; that stretch reads VTFGVITSIIIWALAILASSPLMYF. The Extracellular segment spans residues 172-197; that stretch reads SKTQWNIVRHSCNLHFPYESFQQWKL. A helical membrane pass occupies residues 198–223; that stretch reads FQALKLNLFGLVLPLLVMIVCYTGII. Over 224 to 239 the chain is Cytoplasmic; the sequence is KILLRRPNEKKSKAVR. A helical membrane pass occupies residues 240 to 264; that stretch reads LIFVIMIIFFLFWTPYNLTELISVF. The Extracellular portion of the chain corresponds to 265 to 281; that stretch reads QEFLFTHLCEQNRQLDL. Residues 282–305 traverse the membrane as a helical segment; it reads AMEVTEVIANMHCCVNPVIYAFAG. The Cytoplasmic portion of the chain corresponds to 306–355; that stretch reads ERFRKYLRQLFHRRVAVHLVKWLPFLSGDRLERVSSTSPSTGEHELSAGL.

The protein belongs to the G-protein coupled receptor 1 family. Interacts with CREB3. Interacts with CCL3. Interacts with CCL15. Interacts with CCL23. Interacts with GNAI1. Interacts with PF4/CXCL4.

It localises to the cell membrane. Its function is as follows. Chemokine receptor that plays a crucial role in regulating immune cell migration, inflammation, and immune responses. Contributes to the inflammatory response by recruiting immune cells, such as monocytes, macrophages, T-cells, and dendritic cells, to sites of inflammation for the clearance of pathogens and the resolution of tissue damage. When activated by its ligands including CCL3, CCL5-9, CCL13-16 and CCL23, triggers a signaling cascade within immune cells, leading to their migration towards the source of the chemokine. For example, mediates neutrophil migration after activation by CCL3 leading to the sequential release of TNF-alpha and leukotriene B4. Also mediates monocyte migration upon CXCL4 binding. Activation by CCL5 results in neuroinflammation through the ERK1/2 signaling pathway. The chain is C-C chemokine receptor type 1 (CCR1) from Macaca fascicularis (Crab-eating macaque).